Consider the following 251-residue polypeptide: Triosephosphate isomerase (251 aa).

The substrate site is built by Asn-12 and Lys-14. Residue His-96 is the Electrophile of the active site. Residue Glu-168 is the Proton acceptor of the active site.

It belongs to the triosephosphate isomerase family. In terms of assembly, homodimer.

Its subcellular location is the cytoplasm. It localises to the glycosome. It carries out the reaction D-glyceraldehyde 3-phosphate = dihydroxyacetone phosphate. Its pathway is carbohydrate biosynthesis; gluconeogenesis. It participates in carbohydrate degradation; glycolysis; D-glyceraldehyde 3-phosphate from glycerone phosphate: step 1/1. The protein is Triosephosphate isomerase of Leishmania mexicana.